We begin with the raw amino-acid sequence, 741 residues long: Alpha-1,6-mannosylglycoprotein 6-beta-N-acetylglucosaminyltransferase A (741 aa).

Residues 1–13 (MALFTPWKLSSQK) are Cytoplasmic-facing. Residues 14-30 (LGFFLVTFGFIWGMMLL) traverse the membrane as a helical; Signal-anchor for type II membrane protein segment. At 31–741 (HFTIQQRTQP…GQVALCKDCL (711 aa)) the chain is on the lumenal side. Asn110, Asn115, and Asn118 each carry an N-linked (GlcNAc...) asparagine glycan. 9 disulfides stabilise this stretch: Cys145–Cys183, Cys156–Cys196, Cys172–Cys338, Cys372–Cys626, Cys649–Cys724, Cys653–Cys726, Cys660–Cys713, Cys681–Cys702, and Cys737–Cys740. The tract at residues 213–741 (NSLAEIRTDF…GQVALCKDCL (529 aa)) is sufficient for catalytic activity. Residues 264–269 (KRKRKK) form an important for activity in FGF2 release region. An N-linked (GlcNAc...) asparagine glycan is attached at Asn334. 378 to 379 (DS) is a binding site for substrate. N-linked (GlcNAc...) asparagine glycans are attached at residues Asn433 and Asn447. Glu526 lines the UDP-N-acetyl-alpha-D-glucosamine pocket. Lys554 serves as a coordination point for substrate.

The protein belongs to the glycosyltransferase 18 family. N-glycosylated. In terms of processing, a secreted form is released from the membrane after cleavage by gamma-secretase.

It is found in the golgi apparatus membrane. The protein localises to the secreted. It catalyses the reaction N(4)-{beta-D-GlcNAc-(1-&gt;2)-[beta-D-GlcNAc-(1-&gt;4)]-alpha-D-Man-(1-&gt;3)-[beta-D-GlcNAc-(1-&gt;2)-alpha-D-Man-(1-&gt;6)]-beta-D-Man-(1-&gt;4)-beta-D-GlcNAc-(1-&gt;4)-beta-D-GlcNAc}-L-asparaginyl-[protein] + UDP-N-acetyl-alpha-D-glucosamine = N(4)-{beta-D-GlcNAc-(1-&gt;2)-[beta-D-GlcNAc-(1-&gt;4)]-alpha-D-Man-(1-&gt;3)-[beta-D-GlcNAc-(1-&gt;2)-[beta-D-GlcNAc-(1-&gt;6)]-alpha-D-Man-(1-&gt;6)]-beta-D-Man-(1-&gt;4)-beta-D-GlcNAc-(1-&gt;4)-beta-D-GlcNAc}-L-asparaginyl-[protein] + UDP + H(+). The protein operates within protein modification; protein glycosylation. Activity is increased by Mn(2+) and Mg(2+). In terms of biological role, catalyzes the addition of N-acetylglucosamine (GlcNAc) in beta 1-6 linkage to the alpha-linked mannose of biantennary N-linked oligosaccharides. Catalyzes an important step in the biosynthesis of branched, complex-type N-glycans, such as those found on EGFR, TGFR (TGF-beta receptor) and CDH2. Via its role in the biosynthesis of complex N-glycans, plays an important role in the activation of cellular signaling pathways, reorganization of the actin cytoskeleton, cell-cell adhesion and cell migration. MGAT5-dependent EGFR N-glycosylation enhances the interaction between EGFR and LGALS3 and thereby prevents rapid EGFR endocytosis and prolongs EGFR signaling. Required for efficient interaction between TGFB1 and its receptor. Enhances activation of intracellular signaling pathways by several types of growth factors, including FGF2, PDGF, IGF, TGFB1 and EGF. MGAT5-dependent CDH2 N-glycosylation inhibits CDH2-mediated homotypic cell-cell adhesion and contributes to the regulation of downstream signaling pathways. Promotes cell migration. Contributes to the regulation of the inflammatory response. MGAT5-dependent TCR N-glycosylation enhances the interaction between TCR and LGALS3, limits agonist-induced TCR clustering, and thereby dampens TCR-mediated responses to antigens. Required for normal leukocyte evasation and accumulation at sites of inflammation. Inhibits attachment of monocytes to the vascular endothelium and subsequent monocyte diapedesis. Promotes proliferation of umbilical vein endothelial cells and angiogenesis, at least in part by promoting the release of the growth factor FGF2 from the extracellular matrix. This chain is Alpha-1,6-mannosylglycoprotein 6-beta-N-acetylglucosaminyltransferase A (MGAT5), found in Homo sapiens (Human).